The sequence spans 155 residues: Acetylaranotin biosynthesis cluster protein L (155 aa).

The protein operates within mycotoxin biosynthesis. Its function is as follows. Nonribosomal peptide synthetase; part of the gene cluster that mediates the biosynthesis of acetylaranotin, a member of the epipolythiodioxopiperazine (ETP) class of toxins characterized by a disulfide-bridged cyclic dipeptide. The first step of acetylaranotin biosynthesis is performed by the NRPS ataP which produces diketopiperazine cyclo-L-Phe-L-Phe via the condensation of 2 phenylalanines (L-Phe). The ataC domain of ataTC then catalyzes the formation of bishydroxylation of cyclo-L-Phe-L-Phe. The glutathione S-transferase domain ataG in ataIMG further catalyzes the conjugation of two glutathiones to the bishydroxylated intermediate. Next, the dipeptidase ataJ removes the Glu residues. The following step is performed by the carbon sulfur lyase domain ataI of ataIMG which may convert the bis-cysteinyl adduct to yield an epidithiol intermediate. The ataT domain from ataTC then catalyzes the oxidation of the free dithiols, followed by a cyclization step catalyzed by the cytochrome P450 ataF. AtaF probably acts as an epoxidase to promote a dual epoxidation formation at C8 and C9 along with C8' and C9', followed by the spontaneous nucleophilic attack of the amide nitrogens N10 and N10' to yield an intermediate with the pyrrolidine partial structure. The final steps of acetylaranotin biosynthesis involve the acetylation and ring rearrangement of an epitetrathiodiketopiperazine intermediate to produce acetylaranotin. AtaH probably catalyzes the acetylation of epitetrathiodiketopiperazine to produce a diacetate and ataY is responsible for the formation of the dihydrooxepin moiety that converts the diacetate intermediate to acetylaranotin via acetylapoaranotin. Both enzymes could function independently in the absence of the other. The specific function of ataL within the pathway has still to be determined. The acetylaranotin bis-thiomethyltransferase ataS located outside of acetylaranotin gene cluster is the main thiomethyltransferase responsible for converting acetylaranotin and its related intermediates to their methylated forms. This chain is Acetylaranotin biosynthesis cluster protein L, found in Aspergillus terreus (strain NIH 2624 / FGSC A1156).